The chain runs to 970 residues: Type III restriction-modification enzyme EcoP15I Res subunit (970 aa).

Positions 75–540 are helicase-like domain; that stretch reads AKSNIIDVSM…EVGRGLRLPV (466 aa). The AMP site is built by threonine 91, glycine 122, phenylalanine 126, and aspartate 226. Positions 894–918 are endonuclease domain; sequence TYSPDFAYVVKTAEGDYLNFIIETK.

This sequence belongs to the type III restriction-modification system Res protein family. As to quaternary structure, a heterotetramer with stoichiometry Res(2)Mod(2). A heterotrimer with stoichiometry Res(1)Mod(2). Requires Mg(2+) as cofactor. The cofactor is S-adenosyl-L-methionine.

It carries out the reaction Endonucleolytic cleavage of DNA to give specific double-stranded fragments with terminal 5'-phosphates.. Its function is as follows. A type III restriction enzyme that recognizes 2 inversely oriented double-stranded sequences 5'-CAGCAG-3' and cleaves DNA 25-27 base pairs downstream of one site. DNA restriction requires both the Res and Mod subunits. DNA topology affects its action; relaxed and negatively supercoiled DNA are digested but positively supercoiled DNA is not a good substrate. Interacts with DNA approximately one half-turn downstream of the recognition site. After binding to one recognition site undergoes random one-dimensional diffusion along DNA until it collides with a stationary enzyme bound to the second DNA site, which is when DNA cleavage occurs. This is Type III restriction-modification enzyme EcoP15I Res subunit from Escherichia coli.